Consider the following 47-residue polypeptide: Large ribosomal subunit protein bL34 (47 aa).

Positions 1–28 (MAKGKRTFQPNNRRRARVHGFRTRMRTR) are disordered.

The protein belongs to the bacterial ribosomal protein bL34 family.

The polypeptide is Large ribosomal subunit protein bL34 (Corynebacterium efficiens (strain DSM 44549 / YS-314 / AJ 12310 / JCM 11189 / NBRC 100395)).